Consider the following 65-residue polypeptide: STRKTSWPELVGVTAEEAEKIKEEMSGVEIQVVPPGSFVTADYKPQRVRLYVDESNKVTRTPGIG.

This sequence belongs to the protease inhibitor I13 (potato type I serine protease inhibitor) family.

Functionally, inhibits subtilisin-type microbial serine proteases including proteinase K, subtilisin BPN', subtilisin Carlsberg, subtilisin E, A.oryzae protease and S.griseus alkaline protease. Weakly inhibits pronase E. Does not inhibit trypsin or chymotrypsin. The chain is Subtilisin inhibitor CLSI-I from Canavalia lineata (Beach bean).